Consider the following 362-residue polypeptide: 3-dehydroquinate synthase (362 aa).

Residues 70-75 (EGEQYK), 104-108 (GVIGD), 128-129 (TT), lysine 141, lysine 150, and 168-171 (TLTT) contribute to the NAD(+) site. Residues glutamate 183, histidine 246, and histidine 263 each coordinate Zn(2+).

This sequence belongs to the sugar phosphate cyclases superfamily. Dehydroquinate synthase family. The cofactor is Co(2+). Requires Zn(2+) as cofactor. NAD(+) serves as cofactor.

Its subcellular location is the cytoplasm. It catalyses the reaction 7-phospho-2-dehydro-3-deoxy-D-arabino-heptonate = 3-dehydroquinate + phosphate. It functions in the pathway metabolic intermediate biosynthesis; chorismate biosynthesis; chorismate from D-erythrose 4-phosphate and phosphoenolpyruvate: step 2/7. In terms of biological role, catalyzes the conversion of 3-deoxy-D-arabino-heptulosonate 7-phosphate (DAHP) to dehydroquinate (DHQ). This chain is 3-dehydroquinate synthase, found in Histophilus somni (strain 129Pt) (Haemophilus somnus).